A 359-amino-acid polypeptide reads, in one-letter code: Probable S-adenosylmethionine-dependent methyltransferase At5g38100 (359 aa).

Residues Tyr-19, Cys-63, Asn-68, Asp-104, Ser-133, and Phe-134 each coordinate S-adenosyl-L-homocysteine. Mg(2+) is bound by residues Asn-172, Asp-258, and Phe-260.

The protein belongs to the methyltransferase superfamily. Type-7 methyltransferase family. In terms of assembly, homodimer. It depends on Mg(2+) as a cofactor.

The sequence is that of Probable S-adenosylmethionine-dependent methyltransferase At5g38100 from Arabidopsis thaliana (Mouse-ear cress).